The primary structure comprises 195 residues: Probable nicotinate-nucleotide adenylyltransferase (195 aa).

It belongs to the NadD family.

It catalyses the reaction nicotinate beta-D-ribonucleotide + ATP + H(+) = deamido-NAD(+) + diphosphate. It functions in the pathway cofactor biosynthesis; NAD(+) biosynthesis; deamido-NAD(+) from nicotinate D-ribonucleotide: step 1/1. In terms of biological role, catalyzes the reversible adenylation of nicotinate mononucleotide (NaMN) to nicotinic acid adenine dinucleotide (NaAD). In Mesorhizobium japonicum (strain LMG 29417 / CECT 9101 / MAFF 303099) (Mesorhizobium loti (strain MAFF 303099)), this protein is Probable nicotinate-nucleotide adenylyltransferase.